Reading from the N-terminus, the 178-residue chain is ATP synthase subunit delta (178 aa).

The protein belongs to the ATPase delta chain family. F-type ATPases have 2 components, F(1) - the catalytic core - and F(0) - the membrane proton channel. F(1) has five subunits: alpha(3), beta(3), gamma(1), delta(1), epsilon(1). F(0) has three main subunits: a(1), b(2) and c(10-14). The alpha and beta chains form an alternating ring which encloses part of the gamma chain. F(1) is attached to F(0) by a central stalk formed by the gamma and epsilon chains, while a peripheral stalk is formed by the delta and b chains.

The protein localises to the cell inner membrane. Functionally, f(1)F(0) ATP synthase produces ATP from ADP in the presence of a proton or sodium gradient. F-type ATPases consist of two structural domains, F(1) containing the extramembraneous catalytic core and F(0) containing the membrane proton channel, linked together by a central stalk and a peripheral stalk. During catalysis, ATP synthesis in the catalytic domain of F(1) is coupled via a rotary mechanism of the central stalk subunits to proton translocation. Its function is as follows. This protein is part of the stalk that links CF(0) to CF(1). It either transmits conformational changes from CF(0) to CF(1) or is implicated in proton conduction. This Acinetobacter baylyi (strain ATCC 33305 / BD413 / ADP1) protein is ATP synthase subunit delta.